The chain runs to 239 residues: UPF0641 membrane protein YHR140W (239 aa).

The Cytoplasmic portion of the chain corresponds to 1 to 11 (MMSCLVPTRFT). Residues 12-31 (LTLNTACLLTSTWGFVRATS) form a helical membrane-spanning segment. Residues 32 to 45 (VVLPPSLSKAGHKQ) are Lumenal-facing. Residues 46–66 (FLTIISIIATIINNAVNISNY) traverse the membrane as a helical segment. The Cytoplasmic portion of the chain corresponds to 67–99 (YIQRNNKMNLETKKKSDFISRHVTLPVSLVLES). A helical transmembrane segment spans residues 100–120 (IVATVYWPLRLFFVNLIMHGV). At 121 to 125 (ESTAK) the chain is on the lumenal side. The helical transmembrane segment at 126–146 (TPFPMTVDMAIHLYPILYLLA) threads the bilayer. The Cytoplasmic segment spans residues 147–162 (DHYLSGSGTKFKLSNK). The helical transmembrane segment at 163–183 (HAWLIVTSLAFSYFQYLAFLI) threads the bilayer. Over 184 to 204 (DAGQGQAYPYPFLDVNEPYKS) the chain is Lumenal. Residues 205–225 (IIFVVVATITWAYYVFYQKFP) traverse the membrane as a helical segment. Residues 226–239 (PKYIKKSAKKGDKN) are Cytoplasmic-facing.

Belongs to the UPF0641 family.

The protein localises to the endoplasmic reticulum membrane. This Saccharomyces cerevisiae (strain ATCC 204508 / S288c) (Baker's yeast) protein is UPF0641 membrane protein YHR140W.